Reading from the N-terminus, the 292-residue chain is Homoserine kinase (292 aa).

Residue 84 to 94 (PISRGLGSSSA) participates in ATP binding.

The protein belongs to the GHMP kinase family. Homoserine kinase subfamily.

It is found in the cytoplasm. The enzyme catalyses L-homoserine + ATP = O-phospho-L-homoserine + ADP + H(+). The protein operates within amino-acid biosynthesis; L-threonine biosynthesis; L-threonine from L-aspartate: step 4/5. In terms of biological role, catalyzes the ATP-dependent phosphorylation of L-homoserine to L-homoserine phosphate. The chain is Homoserine kinase from Sulfurovum sp. (strain NBC37-1).